The sequence spans 292 residues: uncharacterized protein (292 aa).

The next 5 helical transmembrane spans lie at 57–77 (IISL…LTLI), 101–121 (VYVF…FNFM), 143–163 (LIYA…AVLI), 184–204 (VVIT…NFVL), and 271–291 (IAFL…DRGI).

This sequence belongs to the CbiQ family.

The protein resides in the cell membrane. This is an uncharacterized protein from Methanocaldococcus jannaschii (strain ATCC 43067 / DSM 2661 / JAL-1 / JCM 10045 / NBRC 100440) (Methanococcus jannaschii).